The following is a 311-amino-acid chain: MLLSLIFPIAVLGEKFDGYGPTAFDVSLSPDIPLGELTGYGKKHFKERENKGFGDLSLVDFNMETEDSFDRSKLVDIGWDLLDSSHGTVMTVQSIRKGEADALSMKVLGHYEVLNLSEGSSNVQEAPITYLPIVFDTLVLDHKKSGYIRDPENDKIIYASWAMFEHKKTKRWFTVVNVDMYSAYSEKTDVQMASILKDMSKEHTIDSNPVFFMGRINAVSDKLQKVIDDKYTNPLDVDRNAKEAPRFTMKNLPDILGNFQRDFVLVRDAASQMVRVNYARILRRGIPTLHYPIHAIVSFETGDKQLTPPAA.

The signal sequence occupies residues 1–13 (MLLSLIFPIAVLG). N-linked (GlcNAc...) asparagine glycosylation is present at Asn-115.

It is found in the secreted. This is an uncharacterized protein from Encephalitozoon cuniculi (strain GB-M1) (Microsporidian parasite).